The sequence spans 30 residues: Cycloviolacin-O2 (30 aa).

Positions 1-30 form a cross-link, cyclopeptide (Gly-Asn); that stretch reads GIPCGESCVWIPCISSAIGCSCKSKVCYRN. Intrachain disulfides connect Cys4–Cys20, Cys8–Cys22, and Cys13–Cys27.

Post-translationally, this is a cyclic peptide.

In terms of biological role, probably participates in a plant defense mechanism. This is Cycloviolacin-O2 from Viola biflora (Yellow wood violet).